Consider the following 328-residue polypeptide: 17-beta-hydroxysteroid dehydrogenase type 1 (328 aa).

NADP(+) contacts are provided by residues 10 to 38 (GCSS…ATLR) and Asp-66. Ser-135 is subject to Phosphoserine; by PKA. Ser-143 lines the substrate pocket. The active-site Proton acceptor is Tyr-156. NADP(+) is bound at residue Lys-160. Residues 291-328 (KAEAGAEAGGGAGPGAEDEAGRGAVGDPELGDPPAAPQ) form a disordered region.

Belongs to the short-chain dehydrogenases/reductases (SDR) family. In terms of assembly, homodimer. Exists predominantly as a homodimer but also exits as monomer.

It localises to the cytoplasm. The catalysed reaction is 17beta-estradiol + NAD(+) = estrone + NADH + H(+). The enzyme catalyses 17beta-estradiol + NADP(+) = estrone + NADPH + H(+). It catalyses the reaction testosterone + NADP(+) = androst-4-ene-3,17-dione + NADPH + H(+). It functions in the pathway steroid biosynthesis; estrogen biosynthesis. In terms of biological role, favors the reduction of estrogens and androgens. Converts estrone (E1) to a more potent estrogen, 17beta-estradiol (E2). Also has 20-alpha-HSD activity. Uses preferentially NADH. This Homo sapiens (Human) protein is 17-beta-hydroxysteroid dehydrogenase type 1.